The sequence spans 491 residues: Ribonuclease Y (491 aa).

A helical transmembrane segment spans residues 4 to 24 (LIATVGVVAVAALVIAIFVVI). The region spanning 181–247 (VVSVVHLPGD…RVALERLVDD (67 aa)) is the KH domain. Residues 307–400 (VLKHLVETAH…TQAADAISGG (94 aa)) form the HD domain.

The protein belongs to the RNase Y family.

The protein resides in the cell membrane. Its function is as follows. Endoribonuclease that initiates mRNA decay. The protein is Ribonuclease Y of Acidothermus cellulolyticus (strain ATCC 43068 / DSM 8971 / 11B).